A 204-amino-acid polypeptide reads, in one-letter code: Small ribosomal subunit protein uS7 (204 aa).

Position 1 is an N-acetylmethionine (Met1). An N-acetylthreonine; in 40S ribosomal protein S5, N-terminally processed modification is found at Thr2. Position 14 is a phosphothreonine (Thr14). Lys47 is subject to N6-acetyllysine; alternate. Residue Lys47 forms a Glycyl lysine isopeptide (Lys-Gly) (interchain with G-Cter in SUMO2); alternate linkage. Residue Ser142 is modified to Phosphoserine.

This sequence belongs to the universal ribosomal protein uS7 family. In terms of assembly, component of the small ribosomal subunit. Part of the small subunit (SSU) processome, composed of more than 70 proteins and the RNA chaperone small nucleolar RNA (snoRNA) U3.

The protein localises to the cytoplasm. The protein resides in the nucleus. Its subcellular location is the nucleolus. Its function is as follows. Component of the small ribosomal subunit. The ribosome is a large ribonucleoprotein complex responsible for the synthesis of proteins in the cell. Part of the small subunit (SSU) processome, first precursor of the small eukaryotic ribosomal subunit. During the assembly of the SSU processome in the nucleolus, many ribosome biogenesis factors, an RNA chaperone and ribosomal proteins associate with the nascent pre-rRNA and work in concert to generate RNA folding, modifications, rearrangements and cleavage as well as targeted degradation of pre-ribosomal RNA by the RNA exosome. The sequence is that of Small ribosomal subunit protein uS7 (Rps5) from Mus musculus (Mouse).